Consider the following 158-residue polypeptide: 6,7-dimethyl-8-ribityllumazine synthase (158 aa).

5-amino-6-(D-ribitylamino)uracil is bound by residues Phe22, Ala57–Glu59, and Ala81–Ile83. A (2S)-2-hydroxy-3-oxobutyl phosphate-binding site is contributed by Gly86 to Thr87. His89 acts as the Proton donor in catalysis. Phe114 lines the 5-amino-6-(D-ribitylamino)uracil pocket. A (2S)-2-hydroxy-3-oxobutyl phosphate-binding site is contributed by Arg128.

It belongs to the DMRL synthase family. As to quaternary structure, forms an icosahedral capsid composed of 60 subunits, arranged as a dodecamer of pentamers.

It carries out the reaction (2S)-2-hydroxy-3-oxobutyl phosphate + 5-amino-6-(D-ribitylamino)uracil = 6,7-dimethyl-8-(1-D-ribityl)lumazine + phosphate + 2 H2O + H(+). It participates in cofactor biosynthesis; riboflavin biosynthesis; riboflavin from 2-hydroxy-3-oxobutyl phosphate and 5-amino-6-(D-ribitylamino)uracil: step 1/2. Functionally, catalyzes the formation of 6,7-dimethyl-8-ribityllumazine by condensation of 5-amino-6-(D-ribitylamino)uracil with 3,4-dihydroxy-2-butanone 4-phosphate. This is the penultimate step in the biosynthesis of riboflavin. This Shewanella pealeana (strain ATCC 700345 / ANG-SQ1) protein is 6,7-dimethyl-8-ribityllumazine synthase.